Here is a 150-residue protein sequence, read N- to C-terminus: Large ribosomal subunit protein uL13 (150 aa).

The disordered stretch occupies residues 129–150 (AEHPHAAQQPKPLQLDPAATAQ).

It belongs to the universal ribosomal protein uL13 family. As to quaternary structure, part of the 50S ribosomal subunit.

In terms of biological role, this protein is one of the early assembly proteins of the 50S ribosomal subunit, although it is not seen to bind rRNA by itself. It is important during the early stages of 50S assembly. This Synechococcus sp. (strain WH7803) protein is Large ribosomal subunit protein uL13.